The following is a 361-amino-acid chain: MSVPFDPASYDRQLEEKTVRLRELLAPFDAPEPQVFDSPREHYRLRAEFRLWREDQKRYYAMFAPGDNRTPILLEGLPIASERINALMPVLRERWEASPTLNHKLFQVDFLTTLAGDAMITLCYHRPLDAEWQAAAAQLAAELDVSLIGRSKGQKLVIGHDYVTEKLDVAGRTFSYRQPEGAFTQPNGTVNGKMLNWAFDALGERQDDLLELYCGNGNFTLPLATRVRKVLATEISKTSVNAALSNLDDNGVDNVTLVRLSAEELTEALNEVRPFRRLHGVDLKSYDFGSVFVDPPRAGMDPDTCELTRRFERILYISCNPETLAANIAQLHDTHRVERCALFDQFPYTHHMESGVLLVRR.

Gln185, Tyr213, Asn218, Glu234, and Asp294 together coordinate S-adenosyl-L-methionine. The active-site Nucleophile is Cys319. Catalysis depends on Glu353, which acts as the Proton acceptor.

The protein belongs to the class I-like SAM-binding methyltransferase superfamily. RNA M5U methyltransferase family. TrmA subfamily.

The catalysed reaction is uridine(54) in tRNA + S-adenosyl-L-methionine = 5-methyluridine(54) in tRNA + S-adenosyl-L-homocysteine + H(+). It carries out the reaction uridine(341) in tmRNA + S-adenosyl-L-methionine = 5-methyluridine(341) in tmRNA + S-adenosyl-L-homocysteine + H(+). Functionally, dual-specificity methyltransferase that catalyzes the formation of 5-methyluridine at position 54 (m5U54) in all tRNAs, and that of position 341 (m5U341) in tmRNA (transfer-mRNA). In Pseudomonas syringae pv. syringae (strain B728a), this protein is tRNA/tmRNA (uracil-C(5))-methyltransferase.